A 235-amino-acid polypeptide reads, in one-letter code: Exosome complex component Rrp4 (235 aa).

Positions 63–137 (GDLVIGYVTD…DEYPIILTLK (75 aa)) constitute an S1 motif domain. One can recognise a KH domain in the interval 147–203 (GTVVEITPVKVPRVIGKRGSMLNTLMELGCDIVVGQNGRIWVKCKDPRDEVFLASLI).

It belongs to the RRP4 family. In terms of assembly, component of the archaeal exosome complex. Forms a trimer of Rrp4 and/or Csl4 subunits. The trimer associates with a hexameric ring-like arrangement composed of 3 Rrp41-Rrp42 heterodimers.

It is found in the cytoplasm. Its function is as follows. Non-catalytic component of the exosome, which is a complex involved in RNA degradation. Increases the RNA binding and the efficiency of RNA degradation. Confers strong poly(A) specificity to the exosome. In Pyrobaculum aerophilum (strain ATCC 51768 / DSM 7523 / JCM 9630 / CIP 104966 / NBRC 100827 / IM2), this protein is Exosome complex component Rrp4.